Here is a 311-residue protein sequence, read N- to C-terminus: Dehydrogenase/reductase SDR family member 7C (311 aa).

The N-terminal stretch at 1–18 is a signal peptide; sequence MGLMAVLMLPLLLLGISG. NAD(+)-binding residues include S47, L49, Y191, K195, and S226. Catalysis depends on Y191, which acts as the Proton acceptor.

Belongs to the short-chain dehydrogenases/reductases (SDR) family. Expressed in skeletal muscle and cardiac muscle. Also expressed in liver, kidney, adipocytes and skin.

Its subcellular location is the sarcoplasmic reticulum membrane. It catalyses the reaction all-trans-retinol + NAD(+) = all-trans-retinal + NADH + H(+). In terms of biological role, NADH-dependent oxidoreductase which catalyzes the oxidation of all-trans-retinol to all-trans-retinal. Plays a role in the regulation of cardiac and skeletal muscle metabolic functions. Maintains Ca(2+) intracellular homeostasis by repressing Ca(2+) release from the sarcoplasmic reticulum (SR) in myotubes, possibly through local alternations in NAD/NADH or retinol/retinal. Also plays a role in Ca(2+) homeostasis by controlling Ca(2+) overload in the cytosol and the SR in myotubes. Involved in glucose uptake into skeletal muscles and muscle performance by activating PI3K and mTORC2-mediated AKT1 phosphorylation signaling pathways, possibly through the action of its downstream catalytic product all-trans-retinoic acid. In Mus musculus (Mouse), this protein is Dehydrogenase/reductase SDR family member 7C.